Here is a 307-residue protein sequence, read N- to C-terminus: Ribonuclease Z (307 aa).

His63, His65, Asp67, His68, His141, Asp212, and His270 together coordinate Zn(2+). The active-site Proton acceptor is the Asp67.

This sequence belongs to the RNase Z family. In terms of assembly, homodimer. The cofactor is Zn(2+).

It carries out the reaction Endonucleolytic cleavage of RNA, removing extra 3' nucleotides from tRNA precursor, generating 3' termini of tRNAs. A 3'-hydroxy group is left at the tRNA terminus and a 5'-phosphoryl group is left at the trailer molecule.. Functionally, zinc phosphodiesterase, which displays some tRNA 3'-processing endonuclease activity. Probably involved in tRNA maturation, by removing a 3'-trailer from precursor tRNA. This chain is Ribonuclease Z, found in Bacillus thuringiensis subsp. konkukian (strain 97-27).